We begin with the raw amino-acid sequence, 116 residues long: Non-specific lipid-transfer protein C, cotyledon-specific isoform (116 aa).

The N-terminal stretch at 1–24 (MKNVVFSVLLLLSFLFCLANTNEA) is a signal peptide. Intrachain disulfides connect cysteine 28-cysteine 76, cysteine 38-cysteine 53, cysteine 54-cysteine 98, and cysteine 74-cysteine 112.

It belongs to the plant LTP family.

Its function is as follows. Plant non-specific lipid-transfer proteins transfer phospholipids as well as galactolipids across membranes. May play a role in wax or cutin deposition in the cell walls of expanding epidermal cells and certain secretory tissues. This is Non-specific lipid-transfer protein C, cotyledon-specific isoform from Ricinus communis (Castor bean).